Reading from the N-terminus, the 225-residue chain is UPF0173 metal-dependent hydrolase Tneu_1348 (225 aa).

Belongs to the UPF0173 family.

The polypeptide is UPF0173 metal-dependent hydrolase Tneu_1348 (Pyrobaculum neutrophilum (strain DSM 2338 / JCM 9278 / NBRC 100436 / V24Sta) (Thermoproteus neutrophilus)).